Here is a 282-residue protein sequence, read N- to C-terminus: Putative phosphoesterase 244L (282 aa).

A divalent metal cation-binding residues include Asp45, Asn80, and His203.

The protein belongs to the metallophosphoesterase superfamily. IIV-6 244L family.

This Invertebrate iridescent virus 6 (IIV-6) protein is Putative phosphoesterase 244L.